We begin with the raw amino-acid sequence, 65 residues long: MPKIKTNRGAAKRFKATASGRYKRAHAFHNHILTKKDSKRKRKLRADALVAEADTPMIRRMMPYS.

It belongs to the bacterial ribosomal protein bL35 family.

This is Large ribosomal subunit protein bL35 from Alkalilimnicola ehrlichii (strain ATCC BAA-1101 / DSM 17681 / MLHE-1).